The following is a 216-amino-acid chain: Uracil phosphoribosyltransferase (216 aa).

5-phospho-alpha-D-ribose 1-diphosphate is bound by residues Arg-85, Arg-110, and 135-143 (DPMVATGYS). Residues Ile-200 and 205-207 (GDA) each bind uracil. Position 206 (Asp-206) interacts with 5-phospho-alpha-D-ribose 1-diphosphate.

It belongs to the UPRTase family. Mg(2+) is required as a cofactor.

The enzyme catalyses UMP + diphosphate = 5-phospho-alpha-D-ribose 1-diphosphate + uracil. It participates in pyrimidine metabolism; UMP biosynthesis via salvage pathway; UMP from uracil: step 1/1. With respect to regulation, allosterically activated by GTP. Catalyzes the conversion of uracil and 5-phospho-alpha-D-ribose 1-diphosphate (PRPP) to UMP and diphosphate. This chain is Uracil phosphoribosyltransferase, found in Paraburkholderia xenovorans (strain LB400).